The chain runs to 460 residues: Bifunctional protein GlmU (460 aa).

Residues 1 to 229 are pyrophosphorylase; it reads MTNYAIILAA…FNESLGVNDR (229 aa). UDP-N-acetyl-alpha-D-glucosamine contacts are provided by residues 8–11, Lys-22, Gln-72, and 77–78; these read LAAG and GT. Mg(2+) is bound at residue Asp-102. Residues Gly-139, Glu-154, Asn-169, and Asn-227 each contribute to the UDP-N-acetyl-alpha-D-glucosamine site. Asn-227 is a Mg(2+) binding site. Residues 230-250 are linker; the sequence is VALAIAETVMRQRITQKHMVN. The interval 251–460 is N-acetyltransferase; the sequence is GVTFQNPETV…RLAHHPSRSK (210 aa). Residues Arg-332 and Lys-350 each contribute to the UDP-N-acetyl-alpha-D-glucosamine site. His-362 serves as the catalytic Proton acceptor. 2 residues coordinate UDP-N-acetyl-alpha-D-glucosamine: Tyr-365 and Asn-376. Residues Ala-379, 385 to 386, Ser-404, Ala-422, and Arg-439 each bind acetyl-CoA; that span reads NY.

The protein in the N-terminal section; belongs to the N-acetylglucosamine-1-phosphate uridyltransferase family. In the C-terminal section; belongs to the transferase hexapeptide repeat family. In terms of assembly, homotrimer. Mg(2+) serves as cofactor.

The protein resides in the cytoplasm. It carries out the reaction alpha-D-glucosamine 1-phosphate + acetyl-CoA = N-acetyl-alpha-D-glucosamine 1-phosphate + CoA + H(+). The catalysed reaction is N-acetyl-alpha-D-glucosamine 1-phosphate + UTP + H(+) = UDP-N-acetyl-alpha-D-glucosamine + diphosphate. The protein operates within nucleotide-sugar biosynthesis; UDP-N-acetyl-alpha-D-glucosamine biosynthesis; N-acetyl-alpha-D-glucosamine 1-phosphate from alpha-D-glucosamine 6-phosphate (route II): step 2/2. Its pathway is nucleotide-sugar biosynthesis; UDP-N-acetyl-alpha-D-glucosamine biosynthesis; UDP-N-acetyl-alpha-D-glucosamine from N-acetyl-alpha-D-glucosamine 1-phosphate: step 1/1. It functions in the pathway bacterial outer membrane biogenesis; LPS lipid A biosynthesis. In terms of biological role, catalyzes the last two sequential reactions in the de novo biosynthetic pathway for UDP-N-acetylglucosamine (UDP-GlcNAc). The C-terminal domain catalyzes the transfer of acetyl group from acetyl coenzyme A to glucosamine-1-phosphate (GlcN-1-P) to produce N-acetylglucosamine-1-phosphate (GlcNAc-1-P), which is converted into UDP-GlcNAc by the transfer of uridine 5-monophosphate (from uridine 5-triphosphate), a reaction catalyzed by the N-terminal domain. This chain is Bifunctional protein GlmU, found in Streptococcus pyogenes serotype M1.